The following is a 301-amino-acid chain: Sulfate adenylyltransferase subunit 2 (301 aa).

It belongs to the PAPS reductase family. CysD subfamily. In terms of assembly, heterodimer composed of CysD, the smaller subunit, and CysN.

It catalyses the reaction sulfate + ATP + H(+) = adenosine 5'-phosphosulfate + diphosphate. Its pathway is sulfur metabolism; hydrogen sulfide biosynthesis; sulfite from sulfate: step 1/3. With CysN forms the ATP sulfurylase (ATPS) that catalyzes the adenylation of sulfate producing adenosine 5'-phosphosulfate (APS) and diphosphate, the first enzymatic step in sulfur assimilation pathway. APS synthesis involves the formation of a high-energy phosphoric-sulfuric acid anhydride bond driven by GTP hydrolysis by CysN coupled to ATP hydrolysis by CysD. The polypeptide is Sulfate adenylyltransferase subunit 2 (Trichlorobacter lovleyi (strain ATCC BAA-1151 / DSM 17278 / SZ) (Geobacter lovleyi)).